The chain runs to 399 residues: Dual-specificity RNA methyltransferase RlmN (399 aa).

Residue glutamate 122 is the Proton acceptor of the active site. The Radical SAM core domain occupies 128 to 371 (ETDRGTLCVS…VRTPRGRDIL (244 aa)). An intrachain disulfide couples cysteine 135 to cysteine 374. Residues cysteine 142, cysteine 146, and cysteine 149 each contribute to the [4Fe-4S] cluster site. S-adenosyl-L-methionine is bound by residues 200-201 (GE), serine 232, 254-256 (SLH), and asparagine 331. Cysteine 374 acts as the S-methylcysteine intermediate in catalysis.

It belongs to the radical SAM superfamily. RlmN family. [4Fe-4S] cluster is required as a cofactor.

It is found in the cytoplasm. It catalyses the reaction adenosine(2503) in 23S rRNA + 2 reduced [2Fe-2S]-[ferredoxin] + 2 S-adenosyl-L-methionine = 2-methyladenosine(2503) in 23S rRNA + 5'-deoxyadenosine + L-methionine + 2 oxidized [2Fe-2S]-[ferredoxin] + S-adenosyl-L-homocysteine. The enzyme catalyses adenosine(37) in tRNA + 2 reduced [2Fe-2S]-[ferredoxin] + 2 S-adenosyl-L-methionine = 2-methyladenosine(37) in tRNA + 5'-deoxyadenosine + L-methionine + 2 oxidized [2Fe-2S]-[ferredoxin] + S-adenosyl-L-homocysteine. Specifically methylates position 2 of adenine 2503 in 23S rRNA and position 2 of adenine 37 in tRNAs. m2A2503 modification seems to play a crucial role in the proofreading step occurring at the peptidyl transferase center and thus would serve to optimize ribosomal fidelity. This chain is Dual-specificity RNA methyltransferase RlmN, found in Rhodopseudomonas palustris (strain TIE-1).